Reading from the N-terminus, the 358-residue chain is MHTTLPESTSENFEYYDLAEACDMGDIVALGTVFVVILYSLVFAFGLVGNLLVVFALINSQRSKSITDIYLLNLALSDLLFVATLPFWTHYVINEQGLHHATCKLITAFFFIGFFGGIFFITVISVDRFLAIVLAANSMSNRTVQHGVTTSLGVWAAAILVATPQFMFTREKENECFGDYPEILQEIWPVILNTEINFLGFLLPLLIMSYCYFRIMQTLFSCKNHKKAKAIRLIFLVVVVFFLFWTPYNVMIFLQTLNLYDFFPKCDVKRDLKLAISVTETIAFSHCCLNPLIYAFAGEKFRRYLYRLYRKCLAVLCCHPDHLSFSSSLSESQRSRRESVLSSNFTHYTSDGDASILL.

Residues 1-26 (MHTTLPESTSENFEYYDLAEACDMGD) are Extracellular-facing. The chain crosses the membrane as a helical span at residues 27-47 (IVALGTVFVVILYSLVFAFGL). At 48–68 (VGNLLVVFALINSQRSKSITD) the chain is on the cytoplasmic side. The helical transmembrane segment at 69–89 (IYLLNLALSDLLFVATLPFWT) threads the bilayer. Over 90-105 (HYVINEQGLHHATCKL) the chain is Extracellular. Cysteines 103 and 176 form a disulfide. Residues 106–126 (ITAFFFIGFFGGIFFITVISV) form a helical membrane-spanning segment. The Cytoplasmic portion of the chain corresponds to 127–147 (DRFLAIVLAANSMSNRTVQHG). Residues 148 to 168 (VTTSLGVWAAAILVATPQFMF) traverse the membrane as a helical segment. The Extracellular portion of the chain corresponds to 169–186 (TREKENECFGDYPEILQE). Residues 187 to 207 (IWPVILNTEINFLGFLLPLLI) traverse the membrane as a helical segment. At 208–232 (MSYCYFRIMQTLFSCKNHKKAKAIR) the chain is on the cytoplasmic side. A helical membrane pass occupies residues 233–253 (LIFLVVVVFFLFWTPYNVMIF). The Extracellular portion of the chain corresponds to 254–275 (LQTLNLYDFFPKCDVKRDLKLA). A helical membrane pass occupies residues 276–296 (ISVTETIAFSHCCLNPLIYAF). The Cytoplasmic segment spans residues 297-358 (AGEKFRRYLY…TSDGDASILL (62 aa)). At threonine 349 the chain carries Phosphothreonine.

It belongs to the G-protein coupled receptor 1 family. In terms of assembly, found in a ternary complex with CX3CL1 and ITGAV:ITGB3 or ITGA4:ITGB1. In terms of processing, this protein is not N-glycosylated which is unusual for G-protein-coupled receptors.

The protein localises to the cell membrane. Functionally, receptor for the C-X3-C chemokine fractalkine (CX3CL1) present on many early leukocyte cells; CX3CR1-CX3CL1 signaling exerts distinct functions in different tissue compartments, such as immune response, inflammation, cell adhesion and chemotaxis. CX3CR1-CX3CL1 signaling mediates cell migratory functions. Responsible for the recruitment of natural killer (NK) cells to inflamed tissues. Acts as a regulator of inflammation process leading to atherogenesis by mediating macrophage and monocyte recruitment to inflamed atherosclerotic plaques, promoting cell survival. Involved in airway inflammation by promoting interleukin 2-producing T helper (Th2) cell survival in inflamed lung. Involved in the migration of circulating monocytes to non-inflamed tissues, where they differentiate into macrophages and dendritic cells. Acts as a negative regulator of angiogenesis, probably by promoting macrophage chemotaxis. Plays a key role in brain microglia by regulating inflammatory response in the central nervous system (CNS) and regulating synapse maturation. Required to restrain the microglial inflammatory response in the CNS and the resulting parenchymal damage in response to pathological stimuli. Involved in brain development by participating in synaptic pruning, a natural process during which brain microglia eliminates extra synapses during postnatal development. Synaptic pruning by microglia is required to promote the maturation of circuit connectivity during brain development. Acts as an important regulator of the gut microbiota by controlling immunity to intestinal bacteria and fungi. Expressed in lamina propria dendritic cells in the small intestine, which form transepithelial dendrites capable of taking up bacteria in order to provide defense against pathogenic bacteria. Required to initiate innate and adaptive immune responses against dissemination of commensal fungi (mycobiota) component of the gut: expressed in mononuclear phagocytes (MNPs) and acts by promoting induction of antifungal IgG antibodies response to confer protection against disseminated C.albicans or C.auris infection. Also acts as a receptor for C-C motif chemokine CCL26, inducing cell chemotaxis. The sequence is that of CX3C chemokine receptor 1 from Bos taurus (Bovine).